The primary structure comprises 58 residues: Large ribosomal subunit protein bL32 (58 aa).

Belongs to the bacterial ribosomal protein bL32 family.

The protein is Large ribosomal subunit protein bL32 of Prochlorococcus marinus (strain MIT 9303).